The primary structure comprises 446 residues: NADH-dependent phenylglyoxylate dehydrogenase subunit beta (446 aa).

4Fe-4S ferredoxin-type domains are found at residues 6–35 (STIA…TDDI), 49–80 (ADKT…KDGT), 82–111 (GVIG…LDEA), and 109–141 (DEAT…HITT).

In terms of assembly, dimer of heteropentamers composed of an alpha (PadG), a beta (PadI), a gamma (PadE), a delta (PadF) and an epsilon (PadH) subunit. The cofactor is [4Fe-4S] cluster.

It carries out the reaction phenylglyoxylate + NAD(+) + CoA = benzoyl-CoA + CO2 + NADH. With respect to regulation, activated by magnesium ions and thiamine diphosphate. Involved in the anaerobic metabolism of phenylalanine and phenylacetate. Catalyzes the oxidative decarboxylation of phenylglyoxylate to benzoyl-CoA and CO(2). It can also react slowly with 2-oxo-3-methylbutanoate and use different electron acceptors such as benzyl viologen, methyl viologen, FAD or FMN, but NAD seems to be the physiological electron acceptor. Also catalyzes an isotope exchange between CO(2) and the carboxyl group which proves partial or complete reversibility of the oxidative decarboxylation reaction. In Aromatoleum evansii (Azoarcus evansii), this protein is NADH-dependent phenylglyoxylate dehydrogenase subunit beta (padI).